The primary structure comprises 529 residues: Delayed-rectifier potassium channel regulatory subunit KCNS1 (529 aa).

Over 1 to 217 (MLMLLVRGTH…LTMENPGYSL (217 aa)) the chain is Cytoplasmic. The chain crosses the membrane as a helical span at residues 218–239 (PSKLFSCVSISVVLASIAAMCI). Residues 240–270 (HSLPEYQAREAAAAVAAVAAGRSPEGVRDDP) are Extracellular-facing. The chain crosses the membrane as a helical span at residues 271-293 (VLRRLEYFCIAWFSFEVSSRLLL). Topologically, residues 294–304 (APSTRNFFCHP) are cytoplasmic. A helical membrane pass occupies residues 305–322 (LNLIDIVSVLPFYLTLLA). Residues 323 to 340 (GVALGDQGGTGGKELGHL) are Extracellular-facing. Residues 341–361 (GKVVQVFRLMRIFRVLKLARH) traverse the membrane as a helical; Voltage-sensor segment. Topologically, residues 362-376 (STGLRSLGATLKHSY) are cytoplasmic. The helical transmembrane segment at 377 to 398 (REVGILLLYLAVGVSVFSGVAY) threads the bilayer. At 399–411 (TAEKEEDVGFNTI) the chain is on the extracellular side. An intramembrane region (helical) is located at residues 412–423 (PACWWWGTVSMT). The short motif at 424-429 (TVGYGD) is the Selectivity filter element. The stretch at 424–431 (TVGYGDVV) is an intramembrane region. Residues 432–438 (PVTVAGK) are Extracellular-facing. Residues 439–467 (LAASGCILGGILVVALPITIIFNKFSHFY) traverse the membrane as a helical segment. Topologically, residues 468-529 (RRQKALEAAV…PSEPPHPQMY (62 aa)) are cytoplasmic. Positions 496 to 529 (SEASLETSRETSQEGRSADLETQAPSEPPHPQMY) are disordered. Basic and acidic residues predominate over residues 502 to 514 (TSRETSQEGRSAD).

It belongs to the potassium channel family. S (TC 1.A.1.2) subfamily. Kv9.1/KCNS1 sub-subfamily. As to quaternary structure, heterotetramer with KCNB1. Heterotetramer with KCNB2. Does not form homomultimers.

The protein resides in the cell membrane. Functionally, potassium channel regulatory subunit that modulate the delayed rectifier voltage-gated potassium channel activity of KCNB1 and KCNB2 by altering their kinetics, expression levels, and shifting the half-inactivation potential to more polarized values. While it does not form functional channels on its own, it can form functional heterotetrameric channels with KCNB1 and KCNB2. Each regulatory subunit has unique regulatory properties that can lead to extensive inhibition, significant changes in kinetics, and/or substantial shifts in the voltage dependencies of the inactivation process. This Papio anubis (Olive baboon) protein is Delayed-rectifier potassium channel regulatory subunit KCNS1.